A 261-amino-acid chain; its full sequence is Secreted RxLR effector protein 154 (261 aa).

A signal peptide spans 1–18 (MRRCALLFRLFLISYSCS). A RxLR-dEER motif is present at residues 49–64 (RILQADDPEHIRTEER).

This sequence belongs to the RxLR effector family.

The protein resides in the secreted. The protein localises to the host cell membrane. Functionally, secreted effector that completely suppresses the host cell death induced by cell death-inducing proteins. The polypeptide is Secreted RxLR effector protein 154 (Plasmopara viticola (Downy mildew of grapevine)).